A 178-amino-acid chain; its full sequence is Large ribosomal subunit protein uL6 (178 aa).

This sequence belongs to the universal ribosomal protein uL6 family. As to quaternary structure, part of the 50S ribosomal subunit.

Its function is as follows. This protein binds to the 23S rRNA, and is important in its secondary structure. It is located near the subunit interface in the base of the L7/L12 stalk, and near the tRNA binding site of the peptidyltransferase center. The polypeptide is Large ribosomal subunit protein uL6 (Limosilactobacillus reuteri (strain DSM 20016) (Lactobacillus reuteri)).